We begin with the raw amino-acid sequence, 376 residues long: 23S rRNA (uracil(747)-C(5))-methyltransferase RlmC (376 aa).

Residues cysteine 3, cysteine 11, cysteine 14, and cysteine 87 each coordinate [4Fe-4S] cluster. 4 residues coordinate S-adenosyl-L-methionine: glutamine 212, phenylalanine 241, glutamate 262, and asparagine 307. Cysteine 334 acts as the Nucleophile in catalysis.

This sequence belongs to the class I-like SAM-binding methyltransferase superfamily. RNA M5U methyltransferase family. RlmC subfamily.

It catalyses the reaction uridine(747) in 23S rRNA + S-adenosyl-L-methionine = 5-methyluridine(747) in 23S rRNA + S-adenosyl-L-homocysteine + H(+). In terms of biological role, catalyzes the formation of 5-methyl-uridine at position 747 (m5U747) in 23S rRNA. The chain is 23S rRNA (uracil(747)-C(5))-methyltransferase RlmC from Salmonella newport (strain SL254).